Here is a 449-residue protein sequence, read N- to C-terminus: Chromosomal replication initiator protein DnaA (449 aa).

The tract at residues 1–83 (MDDSLWSACL…VELEIGSPPT (83 aa)) is domain I, interacts with DnaA modulators. The segment at 77 to 114 (EIGSPPTPDQREAATGATRAAPAQRSSEPRQRPVDSNL) is disordered. The interval 83 to 112 (TPDQREAATGATRAAPAQRSSEPRQRPVDS) is domain II. Positions 89-99 (AATGATRAAPA) are enriched in low complexity. The domain III, AAA+ region stretch occupies residues 113–329 (NLNPGFTFDS…GALRRITANA (217 aa)). 4 residues coordinate ATP: Gly-157, Gly-159, Lys-160, and Thr-161. The domain IV, binds dsDNA stretch occupies residues 330–449 (QFTGRAIDVD…YDNLLRTLST (120 aa)).

It belongs to the DnaA family. As to quaternary structure, oligomerizes as a right-handed, spiral filament on DNA at oriC.

Its subcellular location is the cytoplasm. Functionally, plays an essential role in the initiation and regulation of chromosomal replication. ATP-DnaA binds to the origin of replication (oriC) to initiate formation of the DNA replication initiation complex once per cell cycle. Binds the DnaA box (a 9 base pair repeat at the origin) and separates the double-stranded (ds)DNA. Forms a right-handed helical filament on oriC DNA; dsDNA binds to the exterior of the filament while single-stranded (ss)DNA is stabiized in the filament's interior. The ATP-DnaA-oriC complex binds and stabilizes one strand of the AT-rich DNA unwinding element (DUE), permitting loading of DNA polymerase. After initiation quickly degrades to an ADP-DnaA complex that is not apt for DNA replication. Binds acidic phospholipids. This chain is Chromosomal replication initiator protein DnaA, found in Halorhodospira halophila (strain DSM 244 / SL1) (Ectothiorhodospira halophila (strain DSM 244 / SL1)).